Consider the following 471-residue polypeptide: Regulator of microtubule dynamics protein 3 (471 aa).

The Mitochondrial intermembrane segment spans residues 1 to 9; that stretch reads MSSLGTLGG. Residues 10 to 32 form a helical membrane-spanning segment; it reads ARAGLGLLLGTAAGLGFLCALYS. Over 33–471 the chain is Cytoplasmic; the sequence is QRWKRTQRRG…LEELEVILGE (439 aa). Residues 39–70 form a disordered region; sequence QRRGQSQSQSNSLDYTQTSEPGRQVRPLRAAP. A compositionally biased stretch (low complexity) spans 41 to 50; that stretch reads RGQSQSQSNS. A phosphoserine mark is found at Ser-44, Ser-46, Ser-50, and Ser-57. Residues 90-123 adopt a coiled-coil conformation; it reads LDRLEFVLTSLVALRREVEELRSSLQGLAGQIVG. An FFAT motif is present at residues 156-162; that stretch reads VYFTAAS. Thr-159 bears the Phosphothreonine mark. The tract at residues 169–206 is disordered; that stretch reads AESEGGYTTANAESDYERDSERESDGDGEDEVSCETVK. Phosphoserine occurs at positions 182, 192, 212, and 233. Positions 183-193 are enriched in basic and acidic residues; the sequence is DYERDSERESD.

This sequence belongs to the RMDN family. Interacts with PTPN2. Interacts with microtubules. Interacts with VAPB. Interacts (via FFAT motif) with MOSPD2 (via MSP domain). Interacts (via phosphorylated FFAT motif) with MOSPD2, VAPA and VAPB. In terms of processing, phosphorylation at Thr-160 of the FFAT motif activates interaction with MOSPD2, VAPA and VAPB.

Its subcellular location is the mitochondrion outer membrane. The protein resides in the cytoplasm. The protein localises to the nucleus. It is found in the cytoskeleton. It localises to the spindle. Its subcellular location is the spindle pole. Involved in cellular calcium homeostasis regulation. May participate in differentiation and apoptosis of keratinocytes. Overexpression induces apoptosis. The polypeptide is Regulator of microtubule dynamics protein 3 (Bos taurus (Bovine)).